The sequence spans 434 residues: Tryptamine hydroxycinnamoyltransferase 2 (434 aa).

Active-site proton acceptor residues include H154 and D380.

This sequence belongs to the plant acyltransferase family.

Functionally, hydroxycinnamoyl transferase that catalyzes the transfer of an acyl from p-coumaryol-CoA to tryptamine, to produce coumaroyl tryptamine. Serotonin and tyramine serve as acyl acceptors in vitro. Can use caffeoyl-CoA, and to a lesser extent feruloyl-CoA, as acyl donors. The chain is Tryptamine hydroxycinnamoyltransferase 2 from Oryza sativa subsp. japonica (Rice).